Here is a 201-residue protein sequence, read N- to C-terminus: Urease accessory protein UreG (201 aa).

11-18 serves as a coordination point for GTP; that stretch reads GPVGSGKT.

Belongs to the SIMIBI class G3E GTPase family. UreG subfamily. In terms of assembly, homodimer. UreD, UreF and UreG form a complex that acts as a GTP-hydrolysis-dependent molecular chaperone, activating the urease apoprotein by helping to assemble the nickel containing metallocenter of UreC. The UreE protein probably delivers the nickel.

It is found in the cytoplasm. Facilitates the functional incorporation of the urease nickel metallocenter. This process requires GTP hydrolysis, probably effectuated by UreG. The protein is Urease accessory protein UreG of Synechococcus sp. (strain CC9902).